We begin with the raw amino-acid sequence, 191 residues long: Protein YceI (191 aa).

A signal peptide spans 1 to 22 (MKKNLLGFTFASLLFTTGSAVA).

This sequence belongs to the UPF0312 family. Type 1 subfamily.

The protein resides in the periplasm. In Salmonella agona (strain SL483), this protein is Protein YceI.